A 219-amino-acid polypeptide reads, in one-letter code: Protein VERNALIZATION 2 (219 aa).

Residues 138-180 (REAKVMRYREKKKRRRYEKQIRYESRKAYAEMRPRVKGRFAKV) form the CCT domain.

Mainly expressed in leaves, and at low levels in the shoot apical meristem (SAM).

Its subcellular location is the nucleus. Functionally, involved in the regulation of vernalization; this process in essential for flowering in cv. Bd29-1 but seems do not occur in cv. Bd21. This is Protein VERNALIZATION 2 from Brachypodium distachyon (Purple false brome).